A 96-amino-acid polypeptide reads, in one-letter code: Co-chaperonin GroES (96 aa).

It belongs to the GroES chaperonin family. As to quaternary structure, heptamer of 7 subunits arranged in a ring. Interacts with the chaperonin GroEL.

Its subcellular location is the cytoplasm. Together with the chaperonin GroEL, plays an essential role in assisting protein folding. The GroEL-GroES system forms a nano-cage that allows encapsulation of the non-native substrate proteins and provides a physical environment optimized to promote and accelerate protein folding. GroES binds to the apical surface of the GroEL ring, thereby capping the opening of the GroEL channel. The protein is Co-chaperonin GroES of Herminiimonas arsenicoxydans.